The primary structure comprises 66 residues: Alpha-like toxin BmK-M7 (66 aa).

The LCN-type CS-alpha/beta domain maps to 2–64 (RDGYIALPHN…VPIRVPGRCH (63 aa)). Disulfide bonds link Cys12–Cys63, Cys16–Cys36, Cys22–Cys46, and Cys26–Cys48.

Belongs to the long (4 C-C) scorpion toxin superfamily. Sodium channel inhibitor family. Alpha subfamily. As to expression, expressed by the venom gland.

It localises to the secreted. Functionally, alpha toxins bind voltage-independently at site-3 of sodium channels (Nav) and inhibit the inactivation of the activated channels, thereby blocking neuronal transmission. This toxin is active on both mammals and insects. It can be considered as a cardiotoxin, as it can bind to human cardiac sodium channel and modify its normal properties. The protein is Alpha-like toxin BmK-M7 of Olivierus martensii (Manchurian scorpion).